Reading from the N-terminus, the 237-residue chain is Ribonuclease PH (237 aa).

Phosphate-binding positions include arginine 86 and 124 to 126 (GTR).

It belongs to the RNase PH family. Homohexameric ring arranged as a trimer of dimers.

It carries out the reaction tRNA(n+1) + phosphate = tRNA(n) + a ribonucleoside 5'-diphosphate. In terms of biological role, phosphorolytic 3'-5' exoribonuclease that plays an important role in tRNA 3'-end maturation. Removes nucleotide residues following the 3'-CCA terminus of tRNAs; can also add nucleotides to the ends of RNA molecules by using nucleoside diphosphates as substrates, but this may not be physiologically important. Probably plays a role in initiation of 16S rRNA degradation (leading to ribosome degradation) during starvation. This Shewanella pealeana (strain ATCC 700345 / ANG-SQ1) protein is Ribonuclease PH.